The primary structure comprises 305 residues: Sulfate adenylyltransferase subunit 2 (305 aa).

Belongs to the PAPS reductase family. CysD subfamily. In terms of assembly, heterodimer composed of CysD, the smaller subunit, and CysN.

The catalysed reaction is sulfate + ATP + H(+) = adenosine 5'-phosphosulfate + diphosphate. It participates in sulfur metabolism; hydrogen sulfide biosynthesis; sulfite from sulfate: step 1/3. Its function is as follows. With CysN forms the ATP sulfurylase (ATPS) that catalyzes the adenylation of sulfate producing adenosine 5'-phosphosulfate (APS) and diphosphate, the first enzymatic step in sulfur assimilation pathway. APS synthesis involves the formation of a high-energy phosphoric-sulfuric acid anhydride bond driven by GTP hydrolysis by CysN coupled to ATP hydrolysis by CysD. This chain is Sulfate adenylyltransferase subunit 2, found in Azotobacter vinelandii (strain DJ / ATCC BAA-1303).